The primary structure comprises 351 residues: Histidinol-phosphate aminotransferase (351 aa).

Lys-221 is subject to N6-(pyridoxal phosphate)lysine.

The protein belongs to the class-II pyridoxal-phosphate-dependent aminotransferase family. Histidinol-phosphate aminotransferase subfamily. In terms of assembly, homodimer. Pyridoxal 5'-phosphate serves as cofactor.

It catalyses the reaction L-histidinol phosphate + 2-oxoglutarate = 3-(imidazol-4-yl)-2-oxopropyl phosphate + L-glutamate. It functions in the pathway amino-acid biosynthesis; L-histidine biosynthesis; L-histidine from 5-phospho-alpha-D-ribose 1-diphosphate: step 7/9. The chain is Histidinol-phosphate aminotransferase from Staphylococcus saprophyticus subsp. saprophyticus (strain ATCC 15305 / DSM 20229 / NCIMB 8711 / NCTC 7292 / S-41).